We begin with the raw amino-acid sequence, 403 residues long: Argininosuccinate synthase (403 aa).

Residues 10 to 18 (AYSGGVDTS) and alanine 38 contribute to the ATP site. Residue tyrosine 89 coordinates L-citrulline. An ATP-binding site is contributed by glycine 119. Residues threonine 121, asparagine 125, and aspartate 126 each contribute to the L-aspartate site. Asparagine 125 provides a ligand contact to L-citrulline. Arginine 129, serine 177, serine 186, glutamate 262, and tyrosine 274 together coordinate L-citrulline.

It belongs to the argininosuccinate synthase family. Type 1 subfamily. As to quaternary structure, homotetramer.

It is found in the cytoplasm. The catalysed reaction is L-citrulline + L-aspartate + ATP = 2-(N(omega)-L-arginino)succinate + AMP + diphosphate + H(+). It functions in the pathway amino-acid biosynthesis; L-arginine biosynthesis; L-arginine from L-ornithine and carbamoyl phosphate: step 2/3. The chain is Argininosuccinate synthase from Synechococcus sp. (strain CC9902).